The sequence spans 724 residues: MAGRDPRDRAPRVRNRAPAAVQITAEQLLREAQERQEPTIQAPKQRVQDLEELSEFQARKRTEFESRIRYSRDSILAWTKYAQWEASQNEYERSRSVFERALDVDPRSVDLWIKYTDMELKARNINHARNLFDRAITLLPRVDALWYKYVYLEELLLNVSGARQIFERWMQWEPNDKAWQSYIKLEERYNELDRASAIYERWIACRPIPKNWVAWAKFEEDRGQPDKAREVFQTALEFFGDEEEQVEKAQSVFAAFARMETRLKEFERARVIYKFALARLPRSKSASLYAQYTKFEKQHGDRAGVELTVLGKRRIQYEEELAYDPTNYDAWFSLARLEEDAYRADREDGEDVEPMRVREVYERAVANVPPALEKRYWRRYIYLWLQYAAFEEIDTKDYDRARDVYKAAVKLVPHKTFTFAKLWLAYAYFEIRRLDVSAARKVLGAGIGMCPKPKLFTGYIELEMRLREFDRVRTLYEKFLTYDPSLSSAWIQWTQVESAVEDFERVRAIFELAVQQSLDMPEIVWKAYIDFEAGEGERERARNLYERLLERTSHVKVWISYALMEIATLGGGEDEDGNEIEGEAGDADLARKVFERGYKDLRAKGEKEDRAVLLESWKSFEQEHGDEEMLAKVEDMLPTTRKRWRKAEDGSGELEEYWDLVFPDDEKEANPTSFKFFQAAQAWAQQRAGQGEEGGLSYDLPSDSESENEDEDGDNREEEGMDQD.

HAT repeat units follow at residues E55–S87, N89–K121, R123–L155, L157–R188, N190–D221, G223–R262, K264–Q298, T308–D340, V352–Q386, K396–R432, L434–R465, R467–A499, E501–G534, G536–A567, G585–D626, and D635–K667. The segment at Q681–D724 is disordered. Acidic residues predominate over residues S702–D724.

Belongs to the crooked-neck family. Associated with the spliceosome.

The protein resides in the nucleus. Involved in pre-mRNA splicing and cell cycle progression. Required for the spliceosome assembly and initiation of the DNA replication. In Cryptococcus neoformans var. grubii serotype A (strain H99 / ATCC 208821 / CBS 10515 / FGSC 9487) (Filobasidiella neoformans var. grubii), this protein is Pre-mRNA-splicing factor CLF1 (CLF1).